Consider the following 665-residue polypeptide: Probable arginine--tRNA ligase, cytoplasmic (665 aa).

Residues 204–206, His215, Tyr390, Asp394, and Gln418 each bind L-arginine; that span reads SPN. The short motif at 205–216 is the 'HIGH' region element; that stretch reads PNIAKQMHVGHL. The segment at 535 to 549 is interaction with tRNA; the sequence is NTAVYLLYTYTRICS.

It belongs to the class-I aminoacyl-tRNA synthetase family.

The protein localises to the cytoplasm. Its subcellular location is the cytosol. It catalyses the reaction tRNA(Arg) + L-arginine + ATP = L-arginyl-tRNA(Arg) + AMP + diphosphate. Forms part of a macromolecular complex that catalyzes the attachment of specific amino acids to cognate tRNAs during protein synthesis. The chain is Probable arginine--tRNA ligase, cytoplasmic from Drosophila melanogaster (Fruit fly).